Consider the following 335-residue polypeptide: Glycerol-3-phosphate dehydrogenase [NAD(P)+] (335 aa).

Ser-15, Tyr-16, His-36, and Lys-110 together coordinate NADPH. Sn-glycerol 3-phosphate-binding residues include Lys-110, Gly-139, and Thr-141. Ala-143 lines the NADPH pocket. Residues Lys-195, Asp-248, Ser-258, Arg-259, and Asn-260 each contribute to the sn-glycerol 3-phosphate site. Catalysis depends on Lys-195, which acts as the Proton acceptor. Arg-259 serves as a coordination point for NADPH. The NADPH site is built by Val-283 and Glu-285.

Belongs to the NAD-dependent glycerol-3-phosphate dehydrogenase family.

It localises to the cytoplasm. It catalyses the reaction sn-glycerol 3-phosphate + NAD(+) = dihydroxyacetone phosphate + NADH + H(+). The enzyme catalyses sn-glycerol 3-phosphate + NADP(+) = dihydroxyacetone phosphate + NADPH + H(+). It functions in the pathway membrane lipid metabolism; glycerophospholipid metabolism. Functionally, catalyzes the reduction of the glycolytic intermediate dihydroxyacetone phosphate (DHAP) to sn-glycerol 3-phosphate (G3P), the key precursor for phospholipid synthesis. This Haemophilus influenzae (strain ATCC 51907 / DSM 11121 / KW20 / Rd) protein is Glycerol-3-phosphate dehydrogenase [NAD(P)+].